We begin with the raw amino-acid sequence, 885 residues long: Glycerol-3-phosphate acyltransferase (885 aa).

The span at 1-17 (MPEQNPLPFPDGQPSPP) shows a compositional bias: pro residues. Residues 1 to 26 (MPEQNPLPFPDGQPSPPSTAAADTGA) form a disordered region. The HXXXXD motif signature appears at 362–367 (HRSHMD).

Belongs to the GPAT/DAPAT family.

Its subcellular location is the cell inner membrane. The catalysed reaction is sn-glycerol 3-phosphate + an acyl-CoA = a 1-acyl-sn-glycero-3-phosphate + CoA. It functions in the pathway phospholipid metabolism; CDP-diacylglycerol biosynthesis; CDP-diacylglycerol from sn-glycerol 3-phosphate: step 1/3. The sequence is that of Glycerol-3-phosphate acyltransferase from Xanthomonas axonopodis pv. citri (strain 306).